Here is a 102-residue protein sequence, read N- to C-terminus: MAKGQSLQDPFLNALRRERVPVSIYLVNGIKLQGQIESFDQFVILLKNTVSQMVYKHAISTVVPSRPVSHHSNNAGGGSNNYHHSNNAQPSSAASQDSEDAE.

Residues 9 to 68 (DPFLNALRRERVPVSIYLVNGIKLQGQIESFDQFVILLKNTVSQMVYKHAISTVVPSRPV) form the Sm domain. The tract at residues 63-102 (VPSRPVSHHSNNAGGGSNNYHHSNNAQPSSAASQDSEDAE) is disordered. Over residues 70-96 (HHSNNAGGGSNNYHHSNNAQPSSAASQ) the composition is skewed to low complexity.

It belongs to the Hfq family. Homohexamer.

RNA chaperone that binds small regulatory RNA (sRNAs) and mRNAs to facilitate mRNA translational regulation in response to envelope stress, environmental stress and changes in metabolite concentrations. Also binds with high specificity to tRNAs. This is RNA-binding protein Hfq from Cronobacter sakazakii (strain ATCC BAA-894) (Enterobacter sakazakii).